The chain runs to 296 residues: Non-homologous end joining protein Ku (296 aa).

A Ku domain is found at 11–187; it reads TFGLVNIPVK…ELPEAGEPSS (177 aa). The segment at 254–296 is disordered; the sequence is AAARRRGDEHEAPARGERRHAAAAAARTTGRPRAARASRKKRG. The segment covering 258 to 273 has biased composition (basic and acidic residues); sequence RRGDEHEAPARGERRH. Residues 275-285 show a composition bias toward low complexity; that stretch reads AAAAARTTGRP. Basic residues predominate over residues 286–296; it reads RAARASRKKRG.

It belongs to the prokaryotic Ku family. Homodimer. Interacts with LigD.

In terms of biological role, with LigD forms a non-homologous end joining (NHEJ) DNA repair enzyme, which repairs dsDNA breaks with reduced fidelity. Binds linear dsDNA with 5'- and 3'- overhangs but not closed circular dsDNA nor ssDNA. Recruits and stimulates the ligase activity of LigD. In Anaeromyxobacter sp. (strain K), this protein is Non-homologous end joining protein Ku.